The primary structure comprises 554 residues: Glutamine--tRNA ligase (554 aa).

The short motif at 34 to 44 is the 'HIGH' region element; the sequence is PEPNGYLHIGH. Residues 35–37 and 41–47 each bind ATP; these read EPN and HIGHAKS. D67 and Y212 together coordinate L-glutamine. ATP is bound by residues T231, 261-262, and 269-271; these read RL and MSK. The 'KMSKS' region motif lies at 268–272; that stretch reads VMSKR. Positions 317-324 are interaction with tRNA; the sequence is TKQDNTIE.

It belongs to the class-I aminoacyl-tRNA synthetase family. In terms of assembly, monomer.

The protein localises to the cytoplasm. The enzyme catalyses tRNA(Gln) + L-glutamine + ATP = L-glutaminyl-tRNA(Gln) + AMP + diphosphate. In Shigella flexneri serotype 5b (strain 8401), this protein is Glutamine--tRNA ligase.